A 307-amino-acid polypeptide reads, in one-letter code: 4-hydroxy-3-methylbut-2-enyl diphosphate reductase (307 aa).

C13 is a [4Fe-4S] cluster binding site. (2E)-4-hydroxy-3-methylbut-2-enyl diphosphate-binding residues include H42 and H75. Residues H42 and H75 each coordinate dimethylallyl diphosphate. Positions 42 and 75 each coordinate isopentenyl diphosphate. [4Fe-4S] cluster is bound at residue C97. (2E)-4-hydroxy-3-methylbut-2-enyl diphosphate is bound at residue H125. H125 provides a ligand contact to dimethylallyl diphosphate. H125 contributes to the isopentenyl diphosphate binding site. The Proton donor role is filled by E127. T165 contacts (2E)-4-hydroxy-3-methylbut-2-enyl diphosphate. C195 provides a ligand contact to [4Fe-4S] cluster. S223, S224, N225, and S267 together coordinate (2E)-4-hydroxy-3-methylbut-2-enyl diphosphate. Positions 223, 224, 225, and 267 each coordinate dimethylallyl diphosphate. Positions 223, 224, 225, and 267 each coordinate isopentenyl diphosphate.

Belongs to the IspH family. It depends on [4Fe-4S] cluster as a cofactor.

The enzyme catalyses isopentenyl diphosphate + 2 oxidized [2Fe-2S]-[ferredoxin] + H2O = (2E)-4-hydroxy-3-methylbut-2-enyl diphosphate + 2 reduced [2Fe-2S]-[ferredoxin] + 2 H(+). It carries out the reaction dimethylallyl diphosphate + 2 oxidized [2Fe-2S]-[ferredoxin] + H2O = (2E)-4-hydroxy-3-methylbut-2-enyl diphosphate + 2 reduced [2Fe-2S]-[ferredoxin] + 2 H(+). The protein operates within isoprenoid biosynthesis; dimethylallyl diphosphate biosynthesis; dimethylallyl diphosphate from (2E)-4-hydroxy-3-methylbutenyl diphosphate: step 1/1. It functions in the pathway isoprenoid biosynthesis; isopentenyl diphosphate biosynthesis via DXP pathway; isopentenyl diphosphate from 1-deoxy-D-xylulose 5-phosphate: step 6/6. Functionally, catalyzes the conversion of 1-hydroxy-2-methyl-2-(E)-butenyl 4-diphosphate (HMBPP) into a mixture of isopentenyl diphosphate (IPP) and dimethylallyl diphosphate (DMAPP). Acts in the terminal step of the DOXP/MEP pathway for isoprenoid precursor biosynthesis. This Chlamydia trachomatis serovar A (strain ATCC VR-571B / DSM 19440 / HAR-13) protein is 4-hydroxy-3-methylbut-2-enyl diphosphate reductase.